Consider the following 156-residue polypeptide: Ribosomal RNA large subunit methyltransferase H (156 aa).

S-adenosyl-L-methionine is bound by residues leucine 73, glycine 104, and 123 to 128; that span reads LSALTL.

The protein belongs to the RNA methyltransferase RlmH family. Homodimer.

The protein localises to the cytoplasm. It catalyses the reaction pseudouridine(1915) in 23S rRNA + S-adenosyl-L-methionine = N(3)-methylpseudouridine(1915) in 23S rRNA + S-adenosyl-L-homocysteine + H(+). Its function is as follows. Specifically methylates the pseudouridine at position 1915 (m3Psi1915) in 23S rRNA. In Shewanella denitrificans (strain OS217 / ATCC BAA-1090 / DSM 15013), this protein is Ribosomal RNA large subunit methyltransferase H.